The sequence spans 238 residues: Tabinhibitin 5 (238 aa).

Positions 1–23 are cleaved as a signal peptide; sequence MTSILVSRFLLAALVLQYATIDA. A Cell attachment site motif is present at residues 32–34; sequence RGD. The 145-residue stretch at 67 to 211 folds into the SCP domain; the sequence is LSKINDVRDH…KARALLTCNF (145 aa).

This sequence belongs to the CRISP family. As to expression, expressed in salivary glands.

The protein localises to the secreted. Its function is as follows. Inhibits platelet aggregation induced by all agonists tested (ADP, arachidonic acid, the thromboxane A2 analog U46619, thrombin, and snake venom snaclecs (TMVA that activates platelet through GPIB, and stejnulxin that specifically acts through GPVI (GP6))). May act by competing with fibrinogen for binding to glycoprotein IIb/IIIa (ITGA2B/ITGB3). This is Tabinhibitin 5 from Tabanus yao (Horsefly).